Here is a 332-residue protein sequence, read N- to C-terminus: Glycerol-3-phosphate dehydrogenase [NAD(P)+] (332 aa).

Trp-11, Arg-30, and Lys-108 together coordinate NADPH. Sn-glycerol 3-phosphate-binding residues include Lys-108, Gly-137, and Ser-139. Residue Ala-141 participates in NADPH binding. Sn-glycerol 3-phosphate-binding residues include Lys-192, Asp-245, Ser-255, Arg-256, and Asn-257. Lys-192 (proton acceptor) is an active-site residue. Arg-256 serves as a coordination point for NADPH. Val-280 and Glu-282 together coordinate NADPH.

It belongs to the NAD-dependent glycerol-3-phosphate dehydrogenase family.

It localises to the cytoplasm. It catalyses the reaction sn-glycerol 3-phosphate + NAD(+) = dihydroxyacetone phosphate + NADH + H(+). It carries out the reaction sn-glycerol 3-phosphate + NADP(+) = dihydroxyacetone phosphate + NADPH + H(+). The protein operates within membrane lipid metabolism; glycerophospholipid metabolism. Functionally, catalyzes the reduction of the glycolytic intermediate dihydroxyacetone phosphate (DHAP) to sn-glycerol 3-phosphate (G3P), the key precursor for phospholipid synthesis. The sequence is that of Glycerol-3-phosphate dehydrogenase [NAD(P)+] from Burkholderia orbicola (strain AU 1054).